We begin with the raw amino-acid sequence, 54 residues long: Conotoxin vc5a (54 aa).

Positions V1–A14 are cleaved as a signal peptide. Positions R15–T42 are excised as a propeptide. The residue at position 49 (P49) is a 4-hydroxyproline. Isoleucine amide is present on I53.

It belongs to the conotoxin T superfamily. Contains 2 disulfide bonds that can be either 'C1-C3, C2-C4' or 'C1-C4, C2-C3', since these disulfide connectivities have been observed for conotoxins with cysteine framework V (for examples, see AC P0DQQ7 and AC P81755). In terms of tissue distribution, expressed by the venom duct.

It localises to the secreted. The protein is Conotoxin vc5a of Conus victoriae (Queen Victoria cone).